A 482-amino-acid chain; its full sequence is Bifunctional protein GlmU (482 aa).

Residues 1 to 238 (MSAIRPAAVV…HREIAGINNR (238 aa)) are pyrophosphorylase. UDP-N-acetyl-alpha-D-glucosamine is bound by residues 12-15 (LAAG), K26, Q79, and 84-85 (GT). A Mg(2+)-binding site is contributed by D110. G147, E163, N178, and N236 together coordinate UDP-N-acetyl-alpha-D-glucosamine. N236 contacts Mg(2+). Residues 239–259 (VQLAEARRILNDRLLTGAMLA) form a linker region. The N-acetyltransferase stretch occupies residues 260 to 482 (GVTVVDPATT…AVSREADGED (223 aa)). UDP-N-acetyl-alpha-D-glucosamine contacts are provided by R341 and K359. H371 (proton acceptor) is an active-site residue. UDP-N-acetyl-alpha-D-glucosamine is bound by residues Y374 and N385. Acetyl-CoA contacts are provided by residues A388, 394-395 (NY), S413, A431, and R448. The tract at residues 460–482 (RKRPGSAAAKAAEAVSREADGED) is disordered. Residues 464 to 473 (GSAAAKAAEA) show a composition bias toward low complexity.

In the N-terminal section; belongs to the N-acetylglucosamine-1-phosphate uridyltransferase family. It in the C-terminal section; belongs to the transferase hexapeptide repeat family. Homotrimer. Requires Mg(2+) as cofactor.

Its subcellular location is the cytoplasm. It carries out the reaction alpha-D-glucosamine 1-phosphate + acetyl-CoA = N-acetyl-alpha-D-glucosamine 1-phosphate + CoA + H(+). The enzyme catalyses N-acetyl-alpha-D-glucosamine 1-phosphate + UTP + H(+) = UDP-N-acetyl-alpha-D-glucosamine + diphosphate. The protein operates within nucleotide-sugar biosynthesis; UDP-N-acetyl-alpha-D-glucosamine biosynthesis; N-acetyl-alpha-D-glucosamine 1-phosphate from alpha-D-glucosamine 6-phosphate (route II): step 2/2. Its pathway is nucleotide-sugar biosynthesis; UDP-N-acetyl-alpha-D-glucosamine biosynthesis; UDP-N-acetyl-alpha-D-glucosamine from N-acetyl-alpha-D-glucosamine 1-phosphate: step 1/1. It functions in the pathway bacterial outer membrane biogenesis; LPS lipid A biosynthesis. Catalyzes the last two sequential reactions in the de novo biosynthetic pathway for UDP-N-acetylglucosamine (UDP-GlcNAc). The C-terminal domain catalyzes the transfer of acetyl group from acetyl coenzyme A to glucosamine-1-phosphate (GlcN-1-P) to produce N-acetylglucosamine-1-phosphate (GlcNAc-1-P), which is converted into UDP-GlcNAc by the transfer of uridine 5-monophosphate (from uridine 5-triphosphate), a reaction catalyzed by the N-terminal domain. This chain is Bifunctional protein GlmU, found in Streptomyces coelicolor (strain ATCC BAA-471 / A3(2) / M145).